A 1098-amino-acid polypeptide reads, in one-letter code: Protein diaphanous homolog 2 (1098 aa).

Residue Met-1 is modified to N-acetylmethionine. A disordered region spans residues 1–62 (MEELGAAASG…SFRKSATKRE (62 aa)). Residues 36 to 52 (ANEEETRNKPKLRDRIT) are compositionally biased toward basic and acidic residues. The GBD/FH3 domain maps to 90–463 (SLILSEKEVL…QIVLHCSGMD (374 aa)). Coiled-coil stretches lie at residues 375–416 (QLRV…NMLK) and 490–539 (EENE…GQGV). Disordered regions lie at residues 537–565 (QGVPSAIPGPPPPPPLPGAGPCPPPPPPP), 578–611 (PPPPLPGMPGIPPPPPPPLSGVPPPPPPPGGVFP), 679–699 (MKGQRNTEAAEENRSGPPKKK), 1007–1047 (HKRK…NKEG), and 1063–1098 (GAAFRDRRKRIPRNPDNRRPPLERSRSRHNGAMSSK). Composition is skewed to pro residues over residues 543 to 565 (IPGPPPPPPLPGAGPCPPPPPPP) and 578 to 608 (PPPPLPGMPGIPPPPPPPLSGVPPPPPPPGG). Residues 544–620 (PGPPPPPPLP…PLLSGPIELP (77 aa)) form the FH1 domain. In terms of domain architecture, FH2 spans 625–1025 (QKKLYKPDIP…SRRAKLAKEK (401 aa)). Residues 999–1050 (FLEALKENHKRKEMEEKSRRAKLAKEKAEQEKLERQKKKKQLIDINKEGDET) adopt a coiled-coil conformation. 2 stretches are compositionally biased toward basic and acidic residues: residues 1007 to 1032 (HKRKEMEEKSRRAKLAKEKAEQEKLE) and 1075 to 1087 (RNPDNRRPPLERS). The DAD domain maps to 1048-1078 (DETGVMDNLLEALQSGAAFRDRRKRIPRNPD).

It belongs to the formin homology family. Diaphanous subfamily. As to quaternary structure, interacts with MAPRE1 and APC.

Functionally, may be involved in oogenesis. The chain is Protein diaphanous homolog 2 (Diaph2) from Mus musculus (Mouse).